The primary structure comprises 57 residues: Temporin-ALk (57 aa).

Positions 1–22 are cleaved as a signal peptide; the sequence is MFTLKKSLLLLFFLGTINLSLC. Positions 23 to 46 are excised as a propeptide; the sequence is EQERNAEEERRDDLGERQAEVEKR. Ser-56 is modified (serine amide).

This sequence belongs to the frog skin active peptide (FSAP) family. Temporin subfamily. As to expression, expressed by the skin glands.

The protein resides in the secreted. Its function is as follows. Antimicrobial peptide with weak activity against Gram-positive and Gram-negative bacteria and against fungi. Has been tested against S.aureus (MIC=15.0 ug/mL), B.pumilus (no activity detected), B.cereus (no activity detected), E.coli (MIC=30.0 ug/mL), B.dysenteriae (MIC=60.0 ug/mL), A.cacoaceticus (MIC=75.0 ug/mL), P.aeruginosa (MIC=25.0 ug/mL) and C.albicans (MIC=15.0 ug/mL). Also shows a weak hemolytic activity. This is Temporin-ALk from Amolops loloensis (Lolokou Sucker Frog).